We begin with the raw amino-acid sequence, 394 residues long: UPF0229 protein RBAM_009260 (394 aa).

The protein belongs to the UPF0229 family.

In Bacillus velezensis (strain DSM 23117 / BGSC 10A6 / LMG 26770 / FZB42) (Bacillus amyloliquefaciens subsp. plantarum), this protein is UPF0229 protein RBAM_009260.